A 101-amino-acid polypeptide reads, in one-letter code: Small ribosomal subunit protein uS10 (101 aa).

It belongs to the universal ribosomal protein uS10 family. As to quaternary structure, part of the 30S ribosomal subunit.

Functionally, involved in the binding of tRNA to the ribosomes. This is Small ribosomal subunit protein uS10 from Ureaplasma parvum serovar 3 (strain ATCC 27815 / 27 / NCTC 11736).